Reading from the N-terminus, the 148-residue chain is Cytochrome c oxidase subunit 6, mitochondrial (148 aa).

The N-terminal 40 residues, 1-40, are a transit peptide targeting the mitochondrion; it reads MASFFRTAVRGPSAGLFRAVARPQPIAARVSLFSTSSRFR.

It belongs to the cytochrome c oxidase subunit 5A family. In terms of assembly, component of the cytochrome c oxidase (complex IV, CIV), a multisubunit enzyme composed of 11 subunits. The complex is composed of a catalytic core of 3 subunits Cox1, Cox2 and Cox3, encoded in the mitochondrial DNA, and 8 supernumerary subunits Cox4, Cox5a/Cox5, Cox6, Cox7, Cox8, Cox7a/Cox9, Cox6b/Cox12 and Cox6a/Cox13, which are encoded in the nuclear genome. The complex exists as a monomer or a dimer and forms respiratory supercomplexes (SCs) in the inner mitochondrial membrane with NADH-ubiquinone oxidoreductase (complex I, CI) and ubiquinol-cytochrome c oxidoreductase (cytochrome b-c1 complex, complex III, CIII), resulting in various different assemblies (supercomplexes I(1)IV(1), I(1)III(3)IV(2), III(2)IV(1) and III(2)IV(2) as well as larger supercomplexes of compositions like I(1)III(2)IV(5-6)).

It is found in the mitochondrion inner membrane. It participates in energy metabolism; oxidative phosphorylation. Component of the cytochrome c oxidase, the last enzyme in the mitochondrial electron transport chain which drives oxidative phosphorylation. The respiratory chain contains 3 multisubunit complexes succinate dehydrogenase (complex II, CII), ubiquinol-cytochrome c oxidoreductase (cytochrome b-c1 complex, complex III, CIII) and cytochrome c oxidase (complex IV, CIV), that cooperate to transfer electrons derived from NADH and succinate to molecular oxygen, creating an electrochemical gradient over the inner membrane that drives transmembrane transport and the ATP synthase. Cytochrome c oxidase is the component of the respiratory chain that catalyzes the reduction of oxygen to water. Electrons originating from reduced cytochrome c in the intermembrane space (IMS) are transferred via the dinuclear copper A center (CU(A)) of Cox2 and heme A of Cox1 to the active site in Cox1, a binuclear center (BNC) formed by heme A3 and copper B (CU(B)). The BNC reduces molecular oxygen to 2 water molecules using 4 electrons from cytochrome c in the IMS and 4 protons from the mitochondrial matrix. The polypeptide is Cytochrome c oxidase subunit 6, mitochondrial (cox-6) (Neurospora crassa (strain ATCC 24698 / 74-OR23-1A / CBS 708.71 / DSM 1257 / FGSC 987)).